Reading from the N-terminus, the 333-residue chain is MSGFYDVIKPKTARPPVWFLRQVGRYMPQYKELKGSQTLKAFFHNTEAITEATLLGPSLLKVDAAILFADILSLLDGFNISYDFSPGPQISFSPYEELIFTKDPQETFSYLLQAIKNLVKALDVPLIAFAASPFTMASYLLDGGASKDFPKTMAFLYQYPDKFDALLKKLTEGTVIYLKEQIHAGAAAIQLFESSSLRLPSELFSRYVTAPNTQLISQLKQCIASPISLFCRCFDENFLDLYSIGADTLHPDYHVNLNKIYKTVPQPGSLQGNIDPTLFLLPQDQLLAHLEKYLTTLKDQPNYIFNSGHGILPETPLENVQAAVLCLTSISTS.

Substrate is bound by residues 21–25 (RQVGR), aspartate 70, tyrosine 139, serine 194, and histidine 309.

It belongs to the uroporphyrinogen decarboxylase family. As to quaternary structure, homodimer.

It is found in the cytoplasm. It catalyses the reaction uroporphyrinogen III + 4 H(+) = coproporphyrinogen III + 4 CO2. It functions in the pathway porphyrin-containing compound metabolism; protoporphyrin-IX biosynthesis; coproporphyrinogen-III from 5-aminolevulinate: step 4/4. Functionally, catalyzes the decarboxylation of four acetate groups of uroporphyrinogen-III to yield coproporphyrinogen-III. The polypeptide is Uroporphyrinogen decarboxylase (Chlamydia caviae (strain ATCC VR-813 / DSM 19441 / 03DC25 / GPIC) (Chlamydophila caviae)).